The following is a 127-amino-acid chain: Small ribosomal subunit protein uS12 (127 aa).

At Asp89 the chain carries 3-methylthioaspartic acid. Residues 104–127 (TQGVKDRKQARSKYGTKRAKAGKK) are disordered. Positions 113 to 127 (ARSKYGTKRAKAGKK) are enriched in basic residues.

Belongs to the universal ribosomal protein uS12 family. As to quaternary structure, part of the 30S ribosomal subunit. Contacts proteins S8 and S17. May interact with IF1 in the 30S initiation complex.

In terms of biological role, with S4 and S5 plays an important role in translational accuracy. Interacts with and stabilizes bases of the 16S rRNA that are involved in tRNA selection in the A site and with the mRNA backbone. Located at the interface of the 30S and 50S subunits, it traverses the body of the 30S subunit contacting proteins on the other side and probably holding the rRNA structure together. The combined cluster of proteins S8, S12 and S17 appears to hold together the shoulder and platform of the 30S subunit. The chain is Small ribosomal subunit protein uS12 from Herminiimonas arsenicoxydans.